A 603-amino-acid polypeptide reads, in one-letter code: Prostaglandin G/H synthase 2 (603 aa).

The first 17 residues, 1–17 (MLLPCALLAALLAAGHA), serve as a signal peptide directing secretion. Positions 18-55 (ANPCCSLPCQNRGVCMTTGFDRYECDCTRTGYYGENCT) constitute an EGF-like domain. 4 cysteine pairs are disulfide-bonded: Cys-21–Cys-32, Cys-22–Cys-145, Cys-26–Cys-42, and Cys-44–Cys-54. Residues Asn-53 and Asn-90 are each glycosylated (N-linked (GlcNAc...) asparagine). Arg-106 is a binding site for substrate. Asn-130 carries an N-linked (GlcNAc...) asparagine glycan. The Proton acceptor role is filled by His-193. Residue Tyr-341 participates in substrate binding. Tyr-371 serves as the catalytic For cyclooxygenase activity. Heme b is bound at residue His-374. Cys-555 and Cys-561 are oxidised to a cystine.

It belongs to the prostaglandin G/H synthase family. Homodimer. It depends on heme b as a cofactor.

It localises to the microsome membrane. Its subcellular location is the endoplasmic reticulum membrane. The catalysed reaction is (5Z,8Z,11Z,14Z)-eicosatetraenoate + AH2 + 2 O2 = prostaglandin H2 + A + H2O. It carries out the reaction (9Z,12Z)-octadecadienoate + AH2 + O2 = (9R)-hydroxy-(10E,12Z)-octadecadienoate + A + H2O. The enzyme catalyses (9Z,12Z)-octadecadienoate + AH2 + O2 = (9S)-hydroxy-(10E,12Z)-octadecadienoate + A + H2O. It catalyses the reaction (9Z,12Z)-octadecadienoate + AH2 + O2 = (13S)-hydroxy-(9Z,11E)-octadecadienoate + A + H2O. The catalysed reaction is (9Z,12Z)-octadecadienoate + AH2 + O2 = (13R)-hydroxy-(9Z,11E)-octadecadienoate + A + H2O. The protein operates within lipid metabolism; prostaglandin biosynthesis. Functionally, dual cyclooxygenase and peroxidase in the biosynthesis pathway of prostanoids, a class of C20 oxylipins mainly derived from arachidonate ((5Z,8Z,11Z,14Z)-eicosatetraenoate, AA, C20:4(n-6)), with a particular role in the inflammatory response. The cyclooxygenase activity oxygenates AA to the hydroperoxy endoperoxide prostaglandin G2 (PGG2), and the peroxidase activity reduces PGG2 to the hydroxy endoperoxide prostaglandin H2 (PGH2), the precursor of all 2-series prostaglandins and thromboxanes. This complex transformation is initiated by abstraction of hydrogen at carbon 13 (with S-stereochemistry), followed by insertion of molecular O2 to form the endoperoxide bridge between carbon 9 and 11 that defines prostaglandins. The insertion of a second molecule of O2 (bis-oxygenase activity) yields a hydroperoxy group in PGG2 that is then reduced to PGH2 by two electrons. Similarly catalyzes successive cyclooxygenation and peroxidation of dihomo-gamma-linoleate (DGLA, C20:3(n-6)) and eicosapentaenoate (EPA, C20:5(n-3)) to corresponding PGH1 and PGH3, the precursors of 1- and 3-series prostaglandins. In an alternative pathway of prostanoid biosynthesis, converts 2-arachidonoyl lysophopholipids to prostanoid lysophopholipids, which are then hydrolyzed by intracellular phospholipases to release free prostanoids. Metabolizes 2-arachidonoyl glycerol yielding the glyceryl ester of PGH2, a process that can contribute to pain response. Generates lipid mediators from n-3 and n-6 polyunsaturated fatty acids (PUFAs) via a lipoxygenase-type mechanism. Oxygenates PUFAs to hydroperoxy compounds and then reduces them to corresponding alcohols. Plays a role in the generation of resolution phase interaction products (resolvins) during both sterile and infectious inflammation. Metabolizes docosahexaenoate (DHA, C22:6(n-3)) to 17R-HDHA, a precursor of the D-series resolvins (RvDs). As a component of the biosynthetic pathway of E-series resolvins (RvEs), converts eicosapentaenoate (EPA, C20:5(n-3)) primarily to 18S-HEPE that is further metabolized by ALOX5 and LTA4H to generate 18S-RvE1 and 18S-RvE2. In vascular endothelial cells, converts docosapentaenoate (DPA, C22:5(n-3)) to 13R-HDPA, a precursor for 13-series resolvins (RvTs) shown to activate macrophage phagocytosis during bacterial infection. In activated leukocytes, contributes to oxygenation of hydroxyeicosatetraenoates (HETE) to diHETES (5,15-diHETE and 5,11-diHETE). Can also use linoleate (LA, (9Z,12Z)-octadecadienoate, C18:2(n-6)) as substrate and produce hydroxyoctadecadienoates (HODEs) in a regio- and stereospecific manner, being (9R)-HODE ((9R)-hydroxy-(10E,12Z)-octadecadienoate) and (13S)-HODE ((13S)-hydroxy-(9Z,11E)-octadecadienoate) its major products. During neuroinflammation, plays a role in neuronal secretion of specialized preresolving mediators (SPMs) 15R-lipoxin A4 that regulates phagocytic microglia. This chain is Prostaglandin G/H synthase 2 (PTGS2), found in Gallus gallus (Chicken).